A 303-amino-acid chain; its full sequence is Aspartate carbamoyltransferase catalytic subunit (303 aa).

The carbamoyl phosphate site is built by Arg-49 and Thr-50. L-aspartate is bound at residue Lys-77. Carbamoyl phosphate is bound by residues Arg-99, His-126, and Gln-129. L-aspartate-binding residues include Arg-159 and Arg-211. Carbamoyl phosphate-binding residues include Ser-252 and Pro-253.

This sequence belongs to the aspartate/ornithine carbamoyltransferase superfamily. ATCase family. Heterododecamer (2C3:3R2) of six catalytic PyrB chains organized as two trimers (C3), and six regulatory PyrI chains organized as three dimers (R2).

The enzyme catalyses carbamoyl phosphate + L-aspartate = N-carbamoyl-L-aspartate + phosphate + H(+). It participates in pyrimidine metabolism; UMP biosynthesis via de novo pathway; (S)-dihydroorotate from bicarbonate: step 2/3. Catalyzes the condensation of carbamoyl phosphate and aspartate to form carbamoyl aspartate and inorganic phosphate, the committed step in the de novo pyrimidine nucleotide biosynthesis pathway. This is Aspartate carbamoyltransferase catalytic subunit from Listeria innocua serovar 6a (strain ATCC BAA-680 / CLIP 11262).